A 189-amino-acid chain; its full sequence is Peptidyl-tRNA hydrolase (189 aa).

Y15 lines the tRNA pocket. The Proton acceptor role is filled by H20. F66, N68, and N114 together coordinate tRNA.

It belongs to the PTH family. In terms of assembly, monomer.

The protein localises to the cytoplasm. It catalyses the reaction an N-acyl-L-alpha-aminoacyl-tRNA + H2O = an N-acyl-L-amino acid + a tRNA + H(+). Functionally, hydrolyzes ribosome-free peptidyl-tRNAs (with 1 or more amino acids incorporated), which drop off the ribosome during protein synthesis, or as a result of ribosome stalling. Catalyzes the release of premature peptidyl moieties from peptidyl-tRNA molecules trapped in stalled 50S ribosomal subunits, and thus maintains levels of free tRNAs and 50S ribosomes. In Streptococcus pneumoniae (strain JJA), this protein is Peptidyl-tRNA hydrolase.